We begin with the raw amino-acid sequence, 360 residues long: Peptide chain release factor 1 (360 aa).

Q237 carries the post-translational modification N5-methylglutamine.

The protein belongs to the prokaryotic/mitochondrial release factor family. Post-translationally, methylated by PrmC. Methylation increases the termination efficiency of RF1.

Its subcellular location is the cytoplasm. In terms of biological role, peptide chain release factor 1 directs the termination of translation in response to the peptide chain termination codons UAG and UAA. This is Peptide chain release factor 1 from Nitrosococcus oceani (strain ATCC 19707 / BCRC 17464 / JCM 30415 / NCIMB 11848 / C-107).